Reading from the N-terminus, the 538-residue chain is Phosphoenolpyruvate carboxykinase (ATP) (538 aa).

Arg-61, Tyr-195, and Lys-201 together coordinate substrate. Residues Lys-201, His-220, and Gly-236 to Thr-244 each bind ATP. Mn(2+)-binding residues include Lys-201 and His-220. Position 257 (Asp-257) interacts with Mn(2+). Positions 285, 323, and 449 each coordinate ATP. Arg-323 is a substrate binding site.

It belongs to the phosphoenolpyruvate carboxykinase (ATP) family. Mn(2+) is required as a cofactor.

Its subcellular location is the cytoplasm. The catalysed reaction is oxaloacetate + ATP = phosphoenolpyruvate + ADP + CO2. It participates in carbohydrate biosynthesis; gluconeogenesis. In terms of biological role, involved in the gluconeogenesis. Catalyzes the conversion of oxaloacetate (OAA) to phosphoenolpyruvate (PEP) through direct phosphoryl transfer between the nucleoside triphosphate and OAA. This Bradyrhizobium diazoefficiens (strain JCM 10833 / BCRC 13528 / IAM 13628 / NBRC 14792 / USDA 110) protein is Phosphoenolpyruvate carboxykinase (ATP).